Reading from the N-terminus, the 201-residue chain is Probable GTP-binding protein EngB (201 aa).

Positions 22–197 (RLPEYAFIGR…LDYIDSINQE (176 aa)) constitute an EngB-type G domain. GTP contacts are provided by residues 30–37 (GRSNVGKS), 57–61 (GKTQL), 75–78 (DLPG), 142–145 (TKAD), and 173–178 (VFITSS). The Mg(2+) site is built by serine 37 and threonine 59.

The protein belongs to the TRAFAC class TrmE-Era-EngA-EngB-Septin-like GTPase superfamily. EngB GTPase family. Requires Mg(2+) as cofactor.

Its function is as follows. Necessary for normal cell division and for the maintenance of normal septation. The protein is Probable GTP-binding protein EngB of Porphyromonas gingivalis (strain ATCC 33277 / DSM 20709 / CIP 103683 / JCM 12257 / NCTC 11834 / 2561).